The following is an 865-amino-acid chain: DNA topoisomerase 3-beta (865 aa).

The Toprim domain maps to 6–151; it reads RVLMVAEKPS…KVYRARFSSV (146 aa). Mg(2+) contacts are provided by E12, D116, and D118. Positions 167–587 constitute a Topo IA-type catalytic domain; the sequence is NRDEALAVDA…HVIQQFRRKF (421 aa). The interval 209-214 is interaction with DNA; that stretch reads SYGPCQ. Y331 acts as the O-(5'-phospho-DNA)-tyrosine intermediate in catalysis. The span at 833-853 shows a compositional bias: basic residues; that stretch reads RRGGRGRGRGRGRGRGGRRGS. A disordered region spans residues 833 to 865; the sequence is RRGGRGRGRGRGRGRGGRRGSKSVDPKMSFRDF. The segment covering 854–865 has biased composition (basic and acidic residues); the sequence is KSVDPKMSFRDF.

It belongs to the type IA topoisomerase family. Requires Mg(2+) as cofactor.

It catalyses the reaction ATP-independent breakage of single-stranded DNA, followed by passage and rejoining.. Releases the supercoiling and torsional tension of DNA introduced during the DNA replication and transcription by transiently cleaving and rejoining one strand of the DNA duplex. Introduces a single-strand break via transesterification at a target site in duplex DNA. The scissile phosphodiester is attacked by the catalytic tyrosine of the enzyme, resulting in the formation of a DNA-(5'-phosphotyrosyl)-enzyme intermediate and the expulsion of a 3'-OH DNA strand. The free DNA strand than undergoes passage around the unbroken strand thus removing DNA supercoils. Finally, in the religation step, the DNA 3'-OH attacks the covalent intermediate to expel the active-site tyrosine and restore the DNA phosphodiester backbone. This Arabidopsis thaliana (Mouse-ear cress) protein is DNA topoisomerase 3-beta.